The following is a 717-amino-acid chain: Adhesion cell surface protein MAD1 (717 aa).

The first 19 residues, M1–A19, serve as a signal peptide directing secretion. Composition is skewed to low complexity over residues T237–T254 and S262–P274. 2 disordered regions span residues T237–T392 and R451–C506. Tandem repeats lie at residues G275–P286, S287–S298, G299–P310, G311–P328, G329–P340, G341–P352, G353–P364, and G365–P376. Residues G275–K366 show a composition bias toward polar residues. Low complexity-rich tracts occupy residues T368–T392 and Q484–T503. The CFEM domain maps to T481–P595. Cystine bridges form between C513-C546, C524-C532, and C534-C568. D529 contacts heme. N-linked (GlcNAc...) asparagine glycosylation occurs at N614. Residues P632–S690 form a disordered region. Pro residues predominate over residues Q652–A674. A695 carries GPI-anchor amidated alanine lipidation. A propeptide spans G696–L717 (removed in mature form).

The protein belongs to the RBT5 family. The GPI-anchor is attached to the protein in the endoplasmic reticulum and serves to target the protein to the cell surface. There, the glucosamine-inositol phospholipid moiety is cleaved off and the GPI-modified mannoprotein is covalently attached via its lipidless GPI glycan remnant to the 1,6-beta-glucan of the outer cell wall layer.

Its subcellular location is the secreted. It is found in the cell wall. It localises to the cell membrane. Cell surface adhesion protein that plays a key role in virulence by allowing adherence to the insect host surface. Required to orientate the cytoskeleton and stimulate the expression of genes involved in the cell cycle. Is also involved in achieving the septin hourglass shape and subsequent separation of cells. The polypeptide is Adhesion cell surface protein MAD1 (Metarhizium anisopliae (Entomophthora anisopliae)).